Here is a 460-residue protein sequence, read N- to C-terminus: Ankyrin repeat and MYND domain-containing protein 2 (460 aa).

ANK repeat units follow at residues 45–74 (HGMT…DVNC), 79–108 (HGYT…ETDV), and 159–188 (KLAG…NPLL). Zn(2+) contacts are provided by Cys-320, Cys-323, Cys-332, Cys-335, Cys-341, Cys-345, His-353, and Cys-357. Residues 320 to 357 (CTTCGEKGADKRCSVCKVVMYCDQNCQKTHWFTHKKVC) form an MYND-type zinc finger. 2 stretches are compositionally biased toward basic and acidic residues: residues 371 to 387 (AAKE…KDEA) and 425 to 436 (ELTKEPEARAPR). A disordered region spans residues 371–460 (AAKEKRRQEK…ALQKIQDSEE (90 aa)).

The protein resides in the cell projection. It localises to the cilium. In terms of biological role, may be involved in the trafficking of signaling proteins to the cilia. The protein is Ankyrin repeat and MYND domain-containing protein 2 (ANKMY2) of Gallus gallus (Chicken).